A 97-amino-acid polypeptide reads, in one-letter code: Protein YukE (97 aa).

A coiled-coil region spans residues 21–94 (VESQEVLNQV…ESTDQDIANQ (74 aa)).

The protein belongs to the WXG100 family. sagEsxA-like subfamily. Homodimer.

The protein resides in the secreted. Its function is as follows. Required to deliver LXG toxins to target cells. This chain is Protein YukE (yukE), found in Bacillus subtilis (strain 168).